Reading from the N-terminus, the 332-residue chain is Adenosine deaminase (332 aa).

Positions 12 and 14 each coordinate Zn(2+). The substrate site is built by histidine 14, aspartate 16, and glycine 169. Histidine 196 serves as a coordination point for Zn(2+). Catalysis depends on glutamate 199, which acts as the Proton donor. Position 277 (aspartate 277) interacts with Zn(2+).

This sequence belongs to the metallo-dependent hydrolases superfamily. Adenosine and AMP deaminases family. Adenosine deaminase subfamily. Zn(2+) is required as a cofactor.

It carries out the reaction adenosine + H2O + H(+) = inosine + NH4(+). The enzyme catalyses 2'-deoxyadenosine + H2O + H(+) = 2'-deoxyinosine + NH4(+). Functionally, catalyzes the hydrolytic deamination of adenosine and 2-deoxyadenosine. In Vibrio atlanticus (strain LGP32) (Vibrio splendidus (strain Mel32)), this protein is Adenosine deaminase.